The sequence spans 135 residues: Basic phospholipase A2 6 (135 aa).

Intrachain disulfides connect C28–C87, C42–C134, C44–C60, C59–C115, C66–C108, C76–C101, and C94–C106. Residues Y43, G45, and G47 each contribute to the Ca(2+) site. Residue H63 is part of the active site. D64 serves as a coordination point for Ca(2+). D109 is an active-site residue.

The protein belongs to the phospholipase A2 family. Group I subfamily. D49 sub-subfamily. The cofactor is Ca(2+). In terms of tissue distribution, expressed by the venom gland.

The protein resides in the secreted. It catalyses the reaction a 1,2-diacyl-sn-glycero-3-phosphocholine + H2O = a 1-acyl-sn-glycero-3-phosphocholine + a fatty acid + H(+). Its function is as follows. Snake venom phospholipase A2 (PLA2) that inhibits neuromuscular transmission by blocking acetylcholine release from the nerve termini. PLA2 catalyzes the calcium-dependent hydrolysis of the 2-acyl groups in 3-sn-phosphoglycerides. Very weakly suppress the acetylcholine (ACh)-evoked current mediated by alpha-7-similar nAChRs in L.stagnalis neurons. This Bungarus fasciatus (Banded krait) protein is Basic phospholipase A2 6.